A 48-amino-acid chain; its full sequence is 2-deoxy-glucose resistant protein 1, mitochondrial (48 aa).

Residues 1–28 (MQVGFVSQTNCRSFPACIVFLFQMSQRQ) constitute a mitochondrion transit peptide.

It localises to the mitochondrion. The protein is 2-deoxy-glucose resistant protein 1, mitochondrial (DGR1) of Saccharomyces cerevisiae (strain ATCC 204508 / S288c) (Baker's yeast).